The chain runs to 221 residues: Beta-phosphoglucomutase (221 aa).

The active-site Nucleophile is Asp8. 2 residues coordinate Mg(2+): Asp8 and Asp10. Asp8 carries the post-translational modification 4-aspartylphosphate. The active-site Proton donor/acceptor is the Asp10. Beta-D-glucose 6-phosphate is bound by residues Asp10, Gly46, Val47, Arg49, Ser116, Lys117, and Asn118. Asp170 is a binding site for Mg(2+).

This sequence belongs to the HAD-like hydrolase superfamily. CbbY/CbbZ/Gph/YieH family. Monomer. Mg(2+) serves as cofactor. Post-translationally, autophosphorylated.

The protein localises to the cytoplasm. The enzyme catalyses beta-D-glucose 1-phosphate = beta-D-glucose 6-phosphate. Activated by phosphorylation. Competitively inhibited by alpha-D-galactose-1-phosphate. Catalyzes the interconversion of D-glucose 1-phosphate (G1P) and D-glucose 6-phosphate (G6P), forming beta-D-glucose 1,6-(bis)phosphate (beta-G16P) as an intermediate. The beta-phosphoglucomutase (Beta-PGM) acts on the beta-C(1) anomer of G1P. Glucose or lactose are used in preference to maltose, which is only utilized after glucose or lactose has been exhausted. It plays a key role in the regulation of the flow of carbohydrate intermediates in glycolysis and the formation of the sugar nucleotide UDP-glucose. The protein is Beta-phosphoglucomutase of Lactococcus lactis subsp. lactis (strain IL1403) (Streptococcus lactis).